We begin with the raw amino-acid sequence, 1127 residues long: Cellulose synthase-like protein D1 (1127 aa).

Positions 1–24 (MASKGILKNGGKPPTAPSSAAPTV) are disordered. 2 consecutive transmembrane segments (helical) span residues 262 to 282 (VISP…LFLM) and 292 to 312 (AIWL…SWVL). Residues Asp-392 and Asp-828 contribute to the active site. Helical transmembrane passes span 910-930 (VFLI…QFIV), 936-956 (TFLT…MLEI), 982-1002 (LAAV…SFTL), 1025-1045 (SLMI…AVGF), 1059-1079 (LLGG…FAKG), and 1089-1109 (TIVY…WIAI).

Belongs to the glycosyltransferase 2 family. Plant cellulose synthase-like D subfamily.

The protein localises to the golgi apparatus membrane. Its function is as follows. Thought to be a Golgi-localized beta-glycan synthase that polymerize the backbones of noncellulosic polysaccharides (hemicelluloses) of plant cell wall. In Oryza sativa subsp. indica (Rice), this protein is Cellulose synthase-like protein D1 (CSLD1).